Here is a 559-residue protein sequence, read N- to C-terminus: Germacrene A synthase 1 (559 aa).

Asp-312, Asp-316, Asp-456, Thr-460, and Glu-464 together coordinate Mg(2+). Positions 312–316 (DDTYD) match the DDXXD motif motif.

This sequence belongs to the terpene synthase family. As to quaternary structure, monomer. It depends on Mg(2+) as a cofactor. Mainly expressed in sunflower trichomes.

The enzyme catalyses (2E,6E)-farnesyl diphosphate = (+)-(R)-germacrene A + diphosphate. The protein operates within secondary metabolite biosynthesis; terpenoid biosynthesis. Functionally, sesquiterpene synthase involved in germacrene A biosynthesis. Germacrene A is a precursor of several sesquiterpene lactones. The chain is Germacrene A synthase 1 from Helianthus annuus (Common sunflower).